Here is a 1132-residue protein sequence, read N- to C-terminus: Protein CROWDED NUCLEI 1 (1132 aa).

A disordered region spans residues 1–31 (MSTPLKVWQRWSTPTKATNPDSNGSSHGTGL). The span at 10-28 (RWSTPTKATNPDSNGSSHG) shows a compositional bias: polar residues. Residues 73-714 (LLIEKKEWSS…KKLKEQREQF (642 aa)) are a coiled coil. Short sequence motifs (nuclear localization signal) lie at residues 379-386 (EKREAEWK) and 693-700 (IRKDVDDL). S774 and S803 each carry phosphoserine. The span at 849–859 (AESETGTKEVE) shows a compositional bias: basic and acidic residues. Disordered stretches follow at residues 849–871 (AESETGTKEVEVTNVNSDGDQSD), 883–909 (SLSNLDVDGQSRMKGKGKARTRRTRSV), 924–1039 (INLY…VQQE), and 1061–1132 (GVST…FLTT). The span at 861–871 (TNVNSDGDQSD) shows a compositional bias: polar residues. Residues S865 and S883 each carry the phosphoserine modification. The segment covering 895–907 (MKGKGKARTRRTR) has biased composition (basic residues). A Phosphoserine modification is found at S908. Residues S1093, S1105, and S1112 each carry the phosphoserine modification. Over residues 1095–1105 (DVNKTPLRADS) the composition is skewed to basic and acidic residues.

It belongs to the CRWN family. Core component of the LINC complex which is composed of inner nuclear membrane SUN domain-containing proteins coupled to outer nuclear membrane WIP and WIT proteins. The LINC complex also involves nucleoskeletal proteins CRWN/LINC and possibly KAKU4 and the cytoskeletal myosin KAKU1. Interacts with SUN1 and SUN2. Binds to KAKU4. As to expression, expressed at low levels in roots, leaves, flowers and flower stalks.

Its subcellular location is the nucleus membrane. The protein localises to the nucleus. It localises to the nucleoplasm. It is found in the nucleus lamina. Component of SUN-protein-containing multivariate complexes also called LINC complexes which link the nucleoskeleton and cytoskeleton by providing versatile outer nuclear membrane attachment sites for cytoskeletal filaments. Required for nucleus structure organization (e.g. size and shape). The protein is Protein CROWDED NUCLEI 1 of Arabidopsis thaliana (Mouse-ear cress).